The sequence spans 221 residues: Large ribosomal subunit protein uL3 (221 aa).

The protein belongs to the universal ribosomal protein uL3 family. As to quaternary structure, part of the 50S ribosomal subunit. Forms a cluster with proteins L14 and L19.

Its function is as follows. One of the primary rRNA binding proteins, it binds directly near the 3'-end of the 23S rRNA, where it nucleates assembly of the 50S subunit. This chain is Large ribosomal subunit protein uL3, found in Chlamydia trachomatis serovar A (strain ATCC VR-571B / DSM 19440 / HAR-13).